We begin with the raw amino-acid sequence, 1328 residues long: Retrovirus-related Pol polyprotein from transposon TNT 1-94 (1328 aa).

Positions 189–265 (PENQGQALIT…SGQKNDDNTA (77 aa)) are disordered. A compositionally biased stretch (basic residues) spans 217–229 (ARGKSKNRSKSRV). The segment at 230–247 (RNCYNCNQPGHFKRDCPN) adopts a CCHC-type zinc-finger fold. The segment covering 241–253 (FKRDCPNPRKGKG) has biased composition (basic and acidic residues). Aspartate 297 acts as the For protease activity in catalysis. Residues 473–642 (SSERKLNILD…IPERVWTNKE (170 aa)) form the Integrase catalytic domain. The span at 729–742 (TIPSTSNNPTSAES) shows a compositional bias: polar residues. The interval 729 to 800 (TIPSTSNNPT…RVESRRYPST (72 aa)) is disordered. Residues 770 to 798 (EVEHPTQGEEQHQPLRRSERPRVESRRYP) show a composition bias toward basic and acidic residues.

It carries out the reaction DNA(n) + a 2'-deoxyribonucleoside 5'-triphosphate = DNA(n+1) + diphosphate. This Nicotiana tabacum (Common tobacco) protein is Retrovirus-related Pol polyprotein from transposon TNT 1-94.